Here is a 225-residue protein sequence, read N- to C-terminus: E3 ubiquitin-protein ligase ATL76 (225 aa).

Residues 59–79 (LMLLSVLICGIICCLGLHYII) traverse the membrane as a helical segment. The segment at 135 to 177 (CVICLSDFVSGEQLRLLPKCNHGFHVRCIDKWLQHHLTCPKCR) adopts an RING-type; atypical zinc-finger fold.

Belongs to the RING-type zinc finger family. ATL subfamily.

It localises to the membrane. It carries out the reaction S-ubiquitinyl-[E2 ubiquitin-conjugating enzyme]-L-cysteine + [acceptor protein]-L-lysine = [E2 ubiquitin-conjugating enzyme]-L-cysteine + N(6)-ubiquitinyl-[acceptor protein]-L-lysine.. It functions in the pathway protein modification; protein ubiquitination. In terms of biological role, E3 ubiquitin-protein ligase able to catalyze polyubiquitination with ubiquitin-conjugating enzyme E2 UBC8 in vitro. The polypeptide is E3 ubiquitin-protein ligase ATL76 (ATL76) (Arabidopsis thaliana (Mouse-ear cress)).